Here is an 84-residue protein sequence, read N- to C-terminus: Anaphase-promoting complex subunit 11 (84 aa).

The Zn(2+) site is built by C23, C26, C34, C37, C44, C51, H53, H56, H58, C59, C73, and C76. The segment at C34–R77 adopts an RING-type zinc-finger fold.

It belongs to the RING-box family. The mammalian APC/C is composed at least of 14 distinct subunits ANAPC1, ANAPC2, CDC27/APC3, ANAPC4, ANAPC5, CDC16/APC6, ANAPC7, CDC23/APC8, ANAPC10, ANAPC11, CDC26/APC12, ANAPC13, ANAPC15 and ANAPC16 that assemble into a complex of at least 19 chains with a combined molecular mass of around 1.2 MDa; APC/C interacts with FZR1 and FBXO5. Interacts with the cullin domain of ANAPC2. Interacts with UBE2D2. Post-translationally, auto-ubiquitinated.

It is found in the cytoplasm. The protein resides in the nucleus. It functions in the pathway protein modification; protein ubiquitination. Functionally, together with the cullin protein ANAPC2, constitutes the catalytic component of the anaphase promoting complex/cyclosome (APC/C), a cell cycle-regulated E3 ubiquitin ligase that controls progression through mitosis and the G1 phase of the cell cycle. The APC/C complex acts by mediating ubiquitination and subsequent degradation of target proteins: it mainly mediates the formation of 'Lys-11'-linked polyubiquitin chains and, to a lower extent, the formation of 'Lys-48'- and 'Lys-63'-linked polyubiquitin chains. The APC/C complex catalyzes assembly of branched 'Lys-11'-/'Lys-48'-linked branched ubiquitin chains on target proteins. May recruit the E2 ubiquitin-conjugating enzymes to the complex. The polypeptide is Anaphase-promoting complex subunit 11 (Anapc11) (Mus musculus (Mouse)).